Consider the following 393-residue polypeptide: ATP phosphoribosyltransferase regulatory subunit (393 aa).

This sequence belongs to the class-II aminoacyl-tRNA synthetase family. HisZ subfamily. In terms of assembly, heteromultimer composed of HisG and HisZ subunits.

The protein localises to the cytoplasm. It functions in the pathway amino-acid biosynthesis; L-histidine biosynthesis; L-histidine from 5-phospho-alpha-D-ribose 1-diphosphate: step 1/9. Required for the first step of histidine biosynthesis. May allow the feedback regulation of ATP phosphoribosyltransferase activity by histidine. The protein is ATP phosphoribosyltransferase regulatory subunit of Chromohalobacter salexigens (strain ATCC BAA-138 / DSM 3043 / CIP 106854 / NCIMB 13768 / 1H11).